We begin with the raw amino-acid sequence, 497 residues long: Probable cytosol aminopeptidase (497 aa).

Mn(2+) is bound by residues K263 and D268. K275 is an active-site residue. Mn(2+) is bound by residues D286, D345, and E347. R349 is an active-site residue.

It belongs to the peptidase M17 family. Mn(2+) serves as cofactor.

The protein resides in the cytoplasm. The enzyme catalyses Release of an N-terminal amino acid, Xaa-|-Yaa-, in which Xaa is preferably Leu, but may be other amino acids including Pro although not Arg or Lys, and Yaa may be Pro. Amino acid amides and methyl esters are also readily hydrolyzed, but rates on arylamides are exceedingly low.. It catalyses the reaction Release of an N-terminal amino acid, preferentially leucine, but not glutamic or aspartic acids.. Functionally, presumably involved in the processing and regular turnover of intracellular proteins. Catalyzes the removal of unsubstituted N-terminal amino acids from various peptides. The sequence is that of Probable cytosol aminopeptidase from Allorhizobium ampelinum (strain ATCC BAA-846 / DSM 112012 / S4) (Agrobacterium vitis (strain S4)).